Here is a 461-residue protein sequence, read N- to C-terminus: Aspartic proteinase NANA, chloroplast (461 aa).

A glycan (N-linked (GlcNAc...) asparagine) is linked at asparagine 86. Positions 106 to 456 (YFTEIRVGTP…DLMASTLSFA (351 aa)) constitute a Peptidase A1 domain. Residue aspartate 124 is part of the active site. Residue asparagine 274 is glycosylated (N-linked (GlcNAc...) asparagine). The active site involves aspartate 338. An N-linked (GlcNAc...) asparagine glycan is attached at asparagine 386.

Belongs to the peptidase A1 family.

It localises to the plastid. The protein localises to the chloroplast. Repressed by pepstatin A. In terms of biological role, aspartic proteinase that can use azocasein as substrate and regulates endogenous sugar levels (e.g. sucrose, glucose and fructose) by modulating starch accumulation and remobilization. Influences general morphology and development. This chain is Aspartic proteinase NANA, chloroplast, found in Arabidopsis thaliana (Mouse-ear cress).